A 924-amino-acid polypeptide reads, in one-letter code: MQIPKYENKPFKPPRRVGSNKYTQLKPTATAVTTAPISKAKVTVNLKRSISAGPTLNLAKKPNNLSSNENTRYFTIMYRKPTTKKHKTWSGDGYATLKASSDKLCFYNEAGKFFGSSMLPSDSDSLFETLFKAGSNEVQLDYELKENAEIRSAKEALSQNMGNPNPPTTSTTETVPSTKNDGGKYQMPLSQLFSLNTVKRFKSVTKQTNEHMTTVPKTSQNSKAKKYYPVFDVNKIDNPIVMNKNAAAEVDVIVDPLLGKFLRPHQREGVKFMYDCLMGLARPTIENPDIDCTTKSLVLENDSDISGCLLADDMGLGKTLMSITLIWTLIRQTPFASKVSCSQSGIPLTGLCKKILVVCPVTLIGNWKREFGKWLNLSRIGVLTLSSRNSPDMDKMAVRNFLKVQRIYQVLIIGYEKLLSVSEELEKNKHLIDMLVCDEGHRLKNGASKILNTLKSLDIRRKLLLTGTPIQNDLNEFFTIIDFINPGILGSFASFKRRFIIPITRARDTANRYNEELLEKGEERSKEMIEITKRFILRRTNAILEKYLPPKTDIILFCKPYSQQILAFKDILQGARLDFGQLTFSSSLGLITLLKKVCNSPGLVGSDPYYKSHIKDTQSQDSYSRSLNSGKLRVLMTLLEGIRKGTKEKVVVVSNYTQTLDIIENLMNMAGMSHCRLDGSIPAKQRDSIVTSFNRNPAIFGFLLSAKSGGVGLNLVGASRLILFDNDWNPSVDLQAMSRIHRDGQKKPCFIYRLVTTGCIDEKILQRQLMKNSLSQKFLGDSEMRNKESSNDDLFNKEDLKDLFSVHTDTKSNTHDLICSCDGLGEEIEYPETNQQQNTVELRKRSTTTWTSALDLQKKMNEAATNDDAKKSQYIRQCLVHYKHIDPARQDELFDEVITDSFTDLKDSITFAFVKPGEICLREQ.

Positions 1–10 (MQIPKYENKP) are enriched in basic and acidic residues. Disordered regions lie at residues 1 to 21 (MQIP…GSNK) and 155 to 182 (EALS…KNDG). Residues 168-178 (TTSTTETVPST) show a composition bias toward low complexity. Residues 299–487 (LENDSDISGC…FTIIDFINPG (189 aa)) form the Helicase ATP-binding domain. 346–353 (IPLTGLCK) is an ATP binding site. The short motif at 472–475 (NDLN) is the DEGH box element. K615 participates in a covalent cross-link: Glycyl lysine isopeptide (Lys-Gly) (interchain with G-Cter in ubiquitin). A Helicase C-terminal domain is found at 631 to 790 (KLRVLMTLLE…DSEMRNKESS (160 aa)).

It belongs to the SNF2/RAD54 helicase family. In terms of assembly, interacts with RAD51 and DMC1.

It localises to the nucleus. The enzyme catalyses ATP + H2O = ADP + phosphate + H(+). Its function is as follows. Involved in the recombinational repair of double-strand breaks (DSB) in DNA during mitosis and meiosis. Has DNA dependent ATPase activity. Promotes D-loop (displacement loop) formation with RAD51 recombinase. Modifies the topology of double-stranded DNA during the D-loop reaction to facilitate the invasion of the homologous duplex molecule by the initiating single-stranded DNA substrate. Required for adaptation from G2/M checkpoint arrest induced by a double strand break, by participating in monitoring the extent of single-stranded DNA produced by resection of DNA ends. This role is distinct from its roles in recombination. Promotes colocalization of RAD51 and DMC1 during meiotic recombination. Involved in crossover interference. The protein is DNA repair and recombination protein RDH54 (RDH54) of Saccharomyces cerevisiae (strain AWRI1631) (Baker's yeast).